Consider the following 230-residue polypeptide: Isoprenyl transferase (230 aa).

The active site involves D14. Residue D14 coordinates Mg(2+). Residues 15–18, W19, R27, H31, and 59–61 contribute to the substrate site; these read GNGR and STE. N62 acts as the Proton acceptor in catalysis. Substrate contacts are provided by residues W63, R65, R175, and 181 to 183; that span reads RIS. Residue E194 participates in Mg(2+) binding.

It belongs to the UPP synthase family. As to quaternary structure, homodimer. Requires Mg(2+) as cofactor.

Its function is as follows. Catalyzes the condensation of isopentenyl diphosphate (IPP) with allylic pyrophosphates generating different type of terpenoids. The polypeptide is Isoprenyl transferase (Fusobacterium nucleatum subsp. nucleatum (strain ATCC 25586 / DSM 15643 / BCRC 10681 / CIP 101130 / JCM 8532 / KCTC 2640 / LMG 13131 / VPI 4355)).